A 384-amino-acid polypeptide reads, in one-letter code: Eukaryotic translation initiation factor 3 subunit M (384 aa).

In terms of domain architecture, PCI spans 184–346; sequence ENRKAIEAMI…KKILITGAFP (163 aa).

The protein belongs to the eIF-3 subunit M family. In terms of assembly, component of the eukaryotic translation initiation factor 3 (eIF-3) complex.

It localises to the cytoplasm. Its function is as follows. Component of the eukaryotic translation initiation factor 3 (eIF-3) complex, which is involved in protein synthesis of a specialized repertoire of mRNAs and, together with other initiation factors, stimulates binding of mRNA and methionyl-tRNAi to the 40S ribosome. The eIF-3 complex specifically targets and initiates translation of a subset of mRNAs involved in cell proliferation. The chain is Eukaryotic translation initiation factor 3 subunit M from Schistosoma japonicum (Blood fluke).